A 145-amino-acid polypeptide reads, in one-letter code: Internal scaffolding protein VP3 (145 aa).

The protein belongs to the microviridae B protein family.

It localises to the host cytoplasm. Participates in the assembly of the viral procapsid in the cytoplasm. Released from the procapsid upon genome packaging, possibly through affinity displacement by the protein ORF8, or by proteolysis. The protein is Internal scaffolding protein VP3 of Chlamydia phage 1 (Bacteriophage Chp1).